The sequence spans 146 residues: Hemoglobin subunit beta (146 aa).

Residues 2–146 (HWSAEEKQLI…VAHALARKYH (145 aa)) enclose the Globin domain. Histidine 63 and histidine 92 together coordinate heme b.

This sequence belongs to the globin family. As to quaternary structure, heterotetramer of two alpha chains and two beta chains. In terms of tissue distribution, red blood cells.

In terms of biological role, involved in oxygen transport from the lung to the various peripheral tissues. This Stercorarius maccormicki (South polar skua) protein is Hemoglobin subunit beta (HBB).